Reading from the N-terminus, the 236-residue chain is Mitochondrial-abundant heat soluble protein (236 aa).

The transit peptide at 1–73 directs the protein to the mitochondrion; that stretch reads MSRYLLRDVQ…AARAGVVLRG (73 aa). Disordered regions lie at residues 102–135 and 165–209; these read RIHS…NEAA and RSNG…EIVA. 2 stretches are compositionally biased toward polar residues: residues 105-126 and 192-202; these read SQSS…NSPQ and APDSSKNTKSV. The short motif at 126–143 is the MAHS motif element; it reads QPEGKANEAAERAKQFMN.

It is found in the mitochondrion. In terms of biological role, mitochondrial heat soluble protein acting as a molecular shield in water-deficient condition. This is Mitochondrial-abundant heat soluble protein from Ramazzottius varieornatus (Water bear).